The primary structure comprises 660 residues: Leucine-rich repeat transmembrane protein FLRT2 (660 aa).

A signal peptide spans 1–35 (MGLQTTKWPGRGAFILKFWLIISLGLYLQVSKLLA). Intrachain disulfides connect Cys-36–Cys-42 and Cys-40–Cys-49. One can recognise an LRRNT domain in the interval 36-63 (CPSVCRCDRNFVYCNERSLTSVPLGIPE). Topologically, residues 36–540 (CPSVCRCDRN…QTTSHSMGSP (505 aa)) are extracellular. LRR repeat units follow at residues 62-87 (PEGVTVLYLHNNQINNAGFPAELHNV), 88-108 (QSVHTVYLYGNQLDEFPMNLP), 109-131 (KNVRVLHLQENNIQTISRAALAQ), 132-157 (LLKLEELHLDDNSISTVGVEDGAFRE), 159-181 (ISLKLLFLSKNHLSSVPVGLPVD), 183-202 (QELRVDENRIAVISDMAFQN), 203-228 (LTSLERLIVDGNLLTNKGIAEGTFSH), 229-251 (LTKLKEFSIVRNSLSHPPPDLPG), 252-274 (THLIRLYLQDNQINHIPLTAFAN), and 275-298 (LRKLERLDISNNQLRMLTQGVFDH). Asn-202 is a glycosylation site (N-linked (GlcNAc...) asparagine). The LRRCT domain occupies 310 to 362 (NPWFCDCSIKWVTEWLKYIPSSLNVRGFMCQGPEQVRGMAVRELNMNLLSCPT). 2 cysteine pairs are disulfide-bonded: Cys-314–Cys-339 and Cys-316–Cys-360. A compositionally biased stretch (low complexity) spans 371–396 (TPAPSTVSPTTQSPTLSVPSPSRGSV). A disordered region spans residues 371–413 (TPAPSTVSPTTQSPTLSVPSPSRGSVPPAPTPSKLPTIPDWDG). The Fibronectin type-III domain occupies 419–517 (PPISERIQLS…ICSEATTHAS (99 aa)). Residues 541-561 (FLLAGLIGGAVIFVLVVLLSV) traverse the membrane as a helical segment. The Cytoplasmic segment spans residues 562 to 660 (FCWHMHKKGR…SVPDLEHCHT (99 aa)).

In terms of assembly, self-associates (via leucine-rich repeats), giving rise to homooligomers. Interacts with FGFR1. Interacts with FGFR2. Interacts (via extracellular domain) with ADGRL1/LPHN1. Interacts (via extracellular domain) with ADGRL3 (via olfactomedin-like domain). Interacts (via extracellular domain) with UNC5D (via the first Ig-like domain). Can also interact (via extracellular domain) with UNC5B, but with much lower affinity. Interacts (via extracellular domain) with FN1. N-glycosylated. In terms of processing, proteolytic cleavage in the juxtamembrane region gives rise to a soluble ectodomain. Cleavage is probably effected by a metalloprotease. In terms of tissue distribution, detected in adult brain (at protein level).

It localises to the cell membrane. It is found in the endoplasmic reticulum membrane. The protein localises to the cell junction. Its subcellular location is the focal adhesion. The protein resides in the secreted. It localises to the extracellular space. It is found in the extracellular matrix. The protein localises to the synapse. Its subcellular location is the synaptosome. The protein resides in the microsome membrane. Its function is as follows. Functions in cell-cell adhesion, cell migration and axon guidance. Mediates cell-cell adhesion via its interactions with ADGRL3 and probably also other latrophilins that are expressed at the surface of adjacent cells. May play a role in the migration of cortical neurons during brain development via its interaction with UNC5D. Mediates axon growth cone collapse and plays a repulsive role in neuron guidance via its interaction with UNC5D, and possibly also other UNC-5 family members. Plays a role in fibroblast growth factor-mediated signaling cascades. Required for normal organization of the cardiac basement membrane during embryogenesis, and for normal embryonic epicardium and heart morphogenesis. The sequence is that of Leucine-rich repeat transmembrane protein FLRT2 from Mus musculus (Mouse).